Here is a 315-residue protein sequence, read N- to C-terminus: Acetaldehyde dehydrogenase 2 (315 aa).

15–18 is an NAD(+) binding site; the sequence is SGNI. The active-site Acyl-thioester intermediate is the Cys135. NAD(+) contacts are provided by residues 166 to 174 and Asn293; that span reads SAGPGTRAN.

This sequence belongs to the acetaldehyde dehydrogenase family.

The catalysed reaction is acetaldehyde + NAD(+) + CoA = acetyl-CoA + NADH + H(+). This is Acetaldehyde dehydrogenase 2 from Paraburkholderia phymatum (strain DSM 17167 / CIP 108236 / LMG 21445 / STM815) (Burkholderia phymatum).